Consider the following 496-residue polypeptide: Glycerol kinase (496 aa).

Threonine 12 provides a ligand contact to ADP. 3 residues coordinate ATP: threonine 12, threonine 13, and serine 14. Threonine 12 is a binding site for sn-glycerol 3-phosphate. Arginine 16 lines the ADP pocket. Residues arginine 82, glutamate 83, tyrosine 134, and aspartate 244 each coordinate sn-glycerol 3-phosphate. Residues arginine 82, glutamate 83, tyrosine 134, aspartate 244, and glutamine 245 each coordinate glycerol. ADP contacts are provided by threonine 266 and glycine 309. ATP-binding residues include threonine 266, glycine 309, glutamine 313, and glycine 410. Glycine 410 and asparagine 414 together coordinate ADP.

Belongs to the FGGY kinase family.

The catalysed reaction is glycerol + ATP = sn-glycerol 3-phosphate + ADP + H(+). The protein operates within polyol metabolism; glycerol degradation via glycerol kinase pathway; sn-glycerol 3-phosphate from glycerol: step 1/1. Its activity is regulated as follows. Inhibited by fructose 1,6-bisphosphate (FBP). Functionally, key enzyme in the regulation of glycerol uptake and metabolism. Catalyzes the phosphorylation of glycerol to yield sn-glycerol 3-phosphate. In Treponema denticola (strain ATCC 35405 / DSM 14222 / CIP 103919 / JCM 8153 / KCTC 15104), this protein is Glycerol kinase.